A 379-amino-acid polypeptide reads, in one-letter code: MTPPHNYLAVIKVVGIGGGGVNAVNRMIEQGLKGVEFIAINTDAQALLMSDADVKLDVGRDSTRGLGAGADPEVGRKAAEDAKDEIEELLRGADMVFVTAGEGGGTGTGGAPVVASIARKLGALTVGVVTRPFSFEGKRRSNQAENGIAALRESCDTLIVIPNDRLLQMGDAAVSLMDAFRSADEVLLNGVQGITDLITTPGLINVDFADVKGIMSGAGTALMGIGSARGEGRSLKAAEIAINSPLLEASMEGAQGVLMSIAGGSDLGLFEINEAASLVQDAAHPDANIIFGTVIDDSLGDEVRVTVIAAGFDVSGPGRKPVMGETGGAHRIESAKAGKLTSTLFEPVDAVSVPLHTNGATLSIGGDDDDVDVPPFMRR.

GTP is bound by residues 18 to 22 (GGGVN), 105 to 107 (GTG), glutamate 136, arginine 140, and aspartate 184.

Belongs to the FtsZ family. As to quaternary structure, homodimer. Polymerizes to form a dynamic ring structure in a strictly GTP-dependent manner. Interacts directly with several other division proteins.

It localises to the cytoplasm. Functionally, essential cell division protein that forms a contractile ring structure (Z ring) at the future cell division site. The regulation of the ring assembly controls the timing and the location of cell division. One of the functions of the FtsZ ring is to recruit other cell division proteins to the septum to produce a new cell wall between the dividing cells. Binds GTP and shows GTPase activity. The sequence is that of Cell division protein FtsZ from Mycobacterium bovis (strain ATCC BAA-935 / AF2122/97).